The sequence spans 1038 residues: SEH-associated protein 4 (1038 aa).

Residues 50 to 90 (KDFGSITCLDYSESEIGMIGVGEKNGYLRIFNISGQNSSSP) form a WD 1 repeat. S123 and S136 each carry phosphoserine. 3 WD repeats span residues 147 to 189 (KKQR…DSHE), 235 to 276 (QHPT…DQAS), and 544 to 587 (NTWR…SNQD).

The protein belongs to the WD repeat mio family. In terms of assembly, component of the SEA complex composed of at least IML1/SEA1, RTC1/SEA2, MTC5/SEA3, NPR2, NPR3, SEA4, SEC13 and SEH1.

The protein resides in the cytoplasm. It is found in the vacuole membrane. In terms of biological role, component of the SEA complex which coats the vacuolar membrane and is involved in intracellular trafficking, autophagy, response to nitrogen starvation, and amino acid biogenesis. In Saccharomyces cerevisiae (strain ATCC 204508 / S288c) (Baker's yeast), this protein is SEH-associated protein 4 (SEA4).